The chain runs to 165 residues: Protein SprT (165 aa).

In terms of domain architecture, SprT-like spans 10–158; the sequence is EACYRQAEHF…CRRCKATLVF (149 aa). H69 contacts Zn(2+). E70 is a catalytic residue. H73 provides a ligand contact to Zn(2+).

The protein belongs to the SprT family. Zn(2+) serves as cofactor.

The protein resides in the cytoplasm. This is Protein SprT from Pseudomonas aeruginosa (strain UCBPP-PA14).